Here is a 294-residue protein sequence, read N- to C-terminus: 33 kDa chaperonin (294 aa).

Disulfide bonds link Cys-239–Cys-241 and Cys-272–Cys-275.

This sequence belongs to the HSP33 family. Post-translationally, under oxidizing conditions two disulfide bonds are formed involving the reactive cysteines. Under reducing conditions zinc is bound to the reactive cysteines and the protein is inactive.

The protein resides in the cytoplasm. Redox regulated molecular chaperone. Protects both thermally unfolding and oxidatively damaged proteins from irreversible aggregation. Plays an important role in the bacterial defense system toward oxidative stress. The chain is 33 kDa chaperonin from Listeria monocytogenes serotype 4b (strain CLIP80459).